A 183-amino-acid chain; its full sequence is Capsid protein (183 aa).

A disordered region spans residues 136–183 (NAPILSTLPETTVVRQRGRAPRRRTPSPRRRRSQSPRRRRSQSPASQC). The segment covering 151 to 176 (QRGRAPRRRTPSPRRRRSQSPRRRRS) has biased composition (basic residues). Residues 155 to 161 (APRRRTP) form a 1; half-length repeat. The interval 155–177 (APRRRTPSPRRRRSQSPRRRRSQ) is 3 X 8 AA repeats of S-P-R-R-R-[PR]-S-Q. The Bipartite nuclear localization signal signature appears at 158–175 (RRTPSPRRRRSQSPRRRR). A phosphoserine; by host mark is found at Ser-162 and Ser-170. Tandem repeats lie at residues 162-169 (SPRRRRSQ) and 170-177 (SPRRRRSQ). The segment at 177-183 (QSPASQC) is RNA binding.

This sequence belongs to the orthohepadnavirus core antigen family. Homodimerizes, then multimerizes. Interacts with cytosol exposed regions of viral L glycoprotein present in the reticulum-to-Golgi compartment. Interacts with human FLNB. Phosphorylated form interacts with host importin alpha; this interaction depends on the exposure of the NLS, which itself depends upon genome maturation and/or phosphorylation of the capsid protein. Interacts with host NUP153. Phosphorylated by host SRPK1, SRPK2, and maybe protein kinase C or GAPDH. Phosphorylation is critical for pregenomic RNA packaging. Protein kinase C phosphorylation is stimulated by HBx protein and may play a role in transport of the viral genome to the nucleus at the late step during the viral replication cycle.

The protein localises to the virion. The protein resides in the host cytoplasm. In terms of biological role, self assembles to form an icosahedral capsid. Most capsids appear to be large particles with an icosahedral symmetry of T=4 and consist of 240 copies of capsid protein, though a fraction forms smaller T=3 particles consisting of 180 capsid proteins. Entering capsids are transported along microtubules to the nucleus. Phosphorylation of the capsid is thought to induce exposure of nuclear localization signal in the C-terminal portion of the capsid protein that allows binding to the nuclear pore complex via the importin (karyopherin-) alpha and beta. Capsids are imported in intact form through the nuclear pore into the nuclear basket, where it probably binds NUP153. Only capsids that contain the mature viral genome can release the viral DNA and capsid protein into the nucleoplasm. Immature capsids get stuck in the basket. Capsids encapsulate the pre-genomic RNA and the P protein. Pre-genomic RNA is reverse-transcribed into DNA while the capsid is still in the cytoplasm. The capsid can then either be directed to the nucleus, providing more genomes for transcription, or bud through the endoplasmic reticulum to provide new virions. The protein is Capsid protein of Homo sapiens (Human).